Here is a 358-residue protein sequence, read N- to C-terminus: Chorismate synthase (358 aa).

Residue Arg46 coordinates NADP(+). FMN-binding positions include 123-125, 235-236, Gly275, 290-294, and Arg316; these read RSS, NA, and KPTPS.

This sequence belongs to the chorismate synthase family. Homotetramer. FMNH2 serves as cofactor.

The enzyme catalyses 5-O-(1-carboxyvinyl)-3-phosphoshikimate = chorismate + phosphate. The protein operates within metabolic intermediate biosynthesis; chorismate biosynthesis; chorismate from D-erythrose 4-phosphate and phosphoenolpyruvate: step 7/7. Catalyzes the anti-1,4-elimination of the C-3 phosphate and the C-6 proR hydrogen from 5-enolpyruvylshikimate-3-phosphate (EPSP) to yield chorismate, which is the branch point compound that serves as the starting substrate for the three terminal pathways of aromatic amino acid biosynthesis. This reaction introduces a second double bond into the aromatic ring system. This Helicobacter hepaticus (strain ATCC 51449 / 3B1) protein is Chorismate synthase.